A 254-amino-acid chain; its full sequence is 3-deoxy-manno-octulosonate cytidylyltransferase (254 aa).

Belongs to the KdsB family.

Its subcellular location is the cytoplasm. The catalysed reaction is 3-deoxy-alpha-D-manno-oct-2-ulosonate + CTP = CMP-3-deoxy-beta-D-manno-octulosonate + diphosphate. It participates in nucleotide-sugar biosynthesis; CMP-3-deoxy-D-manno-octulosonate biosynthesis; CMP-3-deoxy-D-manno-octulosonate from 3-deoxy-D-manno-octulosonate and CTP: step 1/1. Its pathway is bacterial outer membrane biogenesis; lipopolysaccharide biosynthesis. In terms of biological role, activates KDO (a required 8-carbon sugar) for incorporation into bacterial lipopolysaccharide in Gram-negative bacteria. In Chlamydia trachomatis serovar L2 (strain ATCC VR-902B / DSM 19102 / 434/Bu), this protein is 3-deoxy-manno-octulosonate cytidylyltransferase.